The chain runs to 277 residues: Urease accessory protein UreD (277 aa).

Belongs to the UreD family. As to quaternary structure, ureD, UreF and UreG form a complex that acts as a GTP-hydrolysis-dependent molecular chaperone, activating the urease apoprotein by helping to assemble the nickel containing metallocenter of UreC. The UreE protein probably delivers the nickel.

The protein localises to the cytoplasm. Its function is as follows. Required for maturation of urease via the functional incorporation of the urease nickel metallocenter. This is Urease accessory protein UreD from Sinorhizobium medicae (strain WSM419) (Ensifer medicae).